The sequence spans 503 residues: Lysine--tRNA ligase (503 aa).

Mg(2+) contacts are provided by E413 and E420.

It belongs to the class-II aminoacyl-tRNA synthetase family. In terms of assembly, homodimer. It depends on Mg(2+) as a cofactor.

The protein resides in the cytoplasm. It catalyses the reaction tRNA(Lys) + L-lysine + ATP = L-lysyl-tRNA(Lys) + AMP + diphosphate. The sequence is that of Lysine--tRNA ligase from Mannheimia succiniciproducens (strain KCTC 0769BP / MBEL55E).